The sequence spans 840 residues: Exocyst complex component 7 (840 aa).

The tract at residues 1-112 (MSAPPRLSAR…ATSTTSPFSY (112 aa)) is disordered. The segment covering 19–31 (SNAPSPTSPTGLK) has biased composition (polar residues). Composition is skewed to low complexity over residues 50 to 73 (KSSV…TLPK) and 83 to 111 (QQQQ…SPFS). A coiled-coil region spans residues 193–227 (KNNATSELTEQDDQLENDKRDLQFIKEQLEKNNSM). The disordered stretch occupies residues 601 to 638 (QDNNNSNSNSNAPSSTSSNSKSSSSSSSSSSSNSASST). Residues 603–637 (NNNSNSNSNAPSSTSSNSKSSSSSSSSSSSNSASS) show a composition bias toward low complexity.

This sequence belongs to the EXO70 family. The exocyst complex is composed of sec3/exoc1, sec5/exoc2, sec6/exoc3, sec8/exoc4, sec10/exoc5, sec15/exoc6, exo70/exoc7 and exo84/exoc8.

The protein resides in the cytoplasm. The protein localises to the cytosol. It localises to the cell membrane. It is found in the midbody. Its subcellular location is the midbody ring. Component of the exocyst complex involved in the docking of exocytic vesicles with fusion sites on the plasma membrane. In Dictyostelium discoideum (Social amoeba), this protein is Exocyst complex component 7 (exoc7).